A 490-amino-acid chain; its full sequence is Ribulose bisphosphate carboxylase large chain (490 aa).

Residues asparagine 127 and threonine 177 each coordinate substrate. Residue lysine 179 is the Proton acceptor of the active site. Residue lysine 181 participates in substrate binding. Residues lysine 205, aspartate 207, and glutamate 208 each contribute to the Mg(2+) site. Lysine 205 carries the post-translational modification N6-carboxylysine. Histidine 297 functions as the Proton acceptor in the catalytic mechanism. Residues arginine 298, histidine 330, and serine 382 each coordinate substrate.

This sequence belongs to the RuBisCO large chain family. Type I subfamily. As to quaternary structure, heterohexadecamer of 8 large chains and 8 small chains. The cofactor is Mg(2+).

Its subcellular location is the plastid. It is found in the chloroplast. The catalysed reaction is 2 (2R)-3-phosphoglycerate + 2 H(+) = D-ribulose 1,5-bisphosphate + CO2 + H2O. It carries out the reaction D-ribulose 1,5-bisphosphate + O2 = 2-phosphoglycolate + (2R)-3-phosphoglycerate + 2 H(+). Functionally, ruBisCO catalyzes two reactions: the carboxylation of D-ribulose 1,5-bisphosphate, the primary event in carbon dioxide fixation, as well as the oxidative fragmentation of the pentose substrate in the photorespiration process. Both reactions occur simultaneously and in competition at the same active site. This Detonula confervacea (Marine diatom) protein is Ribulose bisphosphate carboxylase large chain.